Reading from the N-terminus, the 268-residue chain is Interleukin-1 alpha (268 aa).

Residues 1 to 112 (MAKVPDLFED…DTEEEIIKPR (112 aa)) constitute a propeptide that is removed on maturation. The residue at position 82 (Lys-82) is an N6-acetyllysine. Positions 82–86 (KKRRL) are nuclear localization signal (NLS). Position 87 is a phosphoserine (Ser-87). Residues Asn-102 and Asn-141 are each glycosylated (N-linked (GlcNAc...) asparagine).

This sequence belongs to the IL-1 family. Monomer. Interacts with TMED10; the interaction mediates the translocation from the cytoplasm into the ERGIC (endoplasmic reticulum-Golgi intermediate compartment) and thereby secretion. Interacts with IL1R1. Interacts with S100A13; this interaction is the first step in the export of IL1A, followed by direct translocation of this complex across the plasma membrane. Acetylated within its nuclear localization sequence, which impacts subcellular localization. Post-translationally, proteolytic processed by CAPN1 in a calcium-dependent manner. Cleavage from 31 kDa precursor to 18 kDa biologically active molecules. In terms of processing, phosphorylated. Phosphorylation greatly enhances susceptibility to digestion and promotes the conversion of pre-IL1A alpha to the biologically active IL1A.

It localises to the nucleus. The protein localises to the cytoplasm. Its subcellular location is the secreted. In terms of biological role, cytokine constitutively present intracellularly in nearly all resting non-hematopoietic cells that plays an important role in inflammation and bridges the innate and adaptive immune systems. After binding to its receptor IL1R1 together with its accessory protein IL1RAP, forms the high affinity interleukin-1 receptor complex. Signaling involves the recruitment of adapter molecules such as MYD88, IRAK1 or IRAK4. In turn, mediates the activation of NF-kappa-B and the three MAPK pathways p38, p42/p44 and JNK pathways. Within the cell, acts as an alarmin and cell death results in its liberation in the extracellular space after disruption of the cell membrane to induce inflammation and alert the host to injury or damage. In addition to its role as a danger signal, which occurs when the cytokine is passively released by cell necrosis, directly senses DNA damage and acts as signal for genotoxic stress without loss of cell integrity. The polypeptide is Interleukin-1 alpha (IL1A) (Capra hircus (Goat)).